The sequence spans 142 residues: Large ribosomal subunit protein uL13 (142 aa).

It belongs to the universal ribosomal protein uL13 family. Part of the 50S ribosomal subunit.

Functionally, this protein is one of the early assembly proteins of the 50S ribosomal subunit, although it is not seen to bind rRNA by itself. It is important during the early stages of 50S assembly. This Coxiella burnetii (strain CbuG_Q212) (Coxiella burnetii (strain Q212)) protein is Large ribosomal subunit protein uL13.